Reading from the N-terminus, the 420-residue chain is Putative transporter AmpG 3 (420 aa).

The next 12 helical transmembrane spans lie at 6–26, 41–61, 79–99, 104–124, 141–161, 166–186, 230–250, 274–294, 297–317, 324–344, 359–381, and 386–406; these read YLIG…LIFF, IVGS…WSPF, GWAL…LKRS, LCIT…QDIV, IAFT…SVGA, IIFG…VGPI, LLLI…PMAM, LLIM…IGIF, VLIG…LATI, FIIT…IISI, YSIS…GICA, and WPVF…IFYI.

It belongs to the major facilitator superfamily.

The protein resides in the cell inner membrane. The sequence is that of Putative transporter AmpG 3 (ampG3) from Rickettsia typhi (strain ATCC VR-144 / Wilmington).